The sequence spans 512 residues: MSNILILDFGSQYTNVLAKKIRLLSVFCEVLPWNTPLEKILQKSPSGLIFSGGPHSVYQNNSPEVDKEIYNSNIPILGVCYGMQLIARDFGSEVQGGKSEFGYTPIVFYPSELFKGLADQDAFHTEIRMSHCDCVVVPPKDFFVIASSQHCPIAAIECPKKKLFGLQFHPEVSDSQDIGDKILSNFVKHICQTSETWKIETIEKQLIQGIREKVGETERVLLGLSGGVDSSVLAVLLHNALGDRLSCVFVDTGLLRKNEVEEVKQQFSSLGLEILVVDASEKFFHDLSGIEDPEQKRKVIGAAFIEVFDEASKNLDVQWLAQGTIYSDVIESAKSCDATQVIKSHHNVGGLPEKLNLKLLEPLRFLFKDEVRALGKVLGLPDVLISRHPFPGPGLGVRVLGEVRREYVEIVKNADSIFIEELKKANLYHKVSQAFAVFLPCKSVAVKGDCRHYGYTIALRAVESTDFMTACWPSLSREFLNRCSSRIINEIPEVCRVVYDISDKPPATIEWE.

The 194-residue stretch at 3–196 (NILILDFGSQ…VKHICQTSET (194 aa)) folds into the Glutamine amidotransferase type-1 domain. Cys-80 functions as the Nucleophile in the catalytic mechanism. Residues His-169 and Glu-171 contribute to the active site. Residues 197–387 (WKIETIEKQL…LGLPDVLISR (191 aa)) form the GMPS ATP-PPase domain. 225-231 (SGGVDSS) contacts ATP.

In terms of assembly, homodimer.

It catalyses the reaction XMP + L-glutamine + ATP + H2O = GMP + L-glutamate + AMP + diphosphate + 2 H(+). The protein operates within purine metabolism; GMP biosynthesis; GMP from XMP (L-Gln route): step 1/1. Its function is as follows. Catalyzes the synthesis of GMP from XMP. This Chlamydia muridarum (strain MoPn / Nigg) protein is GMP synthase [glutamine-hydrolyzing] (guaA).